Consider the following 372-residue polypeptide: Cytochrome b (372 aa).

4 consecutive transmembrane segments (helical) span residues 25–45 (FGSM…FLAI), 69–90 (WTMQ…YIHI), 105–125 (WLSG…GYVL), and 170–190 (FFAL…IHII). Residues H75 and H89 each contribute to the heme b site. Heme b contacts are provided by H174 and H188. A ubiquinone is bound at residue H193. 4 helical membrane passes run 218–238 (YKDI…MAFA), 280–300 (LGGT…PFTH), 312–332 (LAQM…WTAT), and 339–358 (FILI…IINP).

Belongs to the cytochrome b family. The cytochrome bc1 complex contains 3 respiratory subunits (MT-CYB, CYC1 and UQCRFS1), 2 core proteins (UQCRC1 and UQCRC2) and probably 6 low-molecular weight proteins. The cofactor is heme b.

The protein localises to the mitochondrion inner membrane. In terms of biological role, component of the ubiquinol-cytochrome c reductase complex (complex III or cytochrome b-c1 complex) that is part of the mitochondrial respiratory chain. The b-c1 complex mediates electron transfer from ubiquinol to cytochrome c. Contributes to the generation of a proton gradient across the mitochondrial membrane that is then used for ATP synthesis. This chain is Cytochrome b (MT-CYB), found in Acanthophis antarcticus (Common death adder).